The following is a 663-amino-acid chain: Beta-galactosidase YesZ (663 aa).

Arg-107 contacts substrate. Cys-111 lines the Zn(2+) pocket. Asn-145 provides a ligand contact to substrate. Glu-146 serves as the catalytic Proton donor. Zn(2+) contacts are provided by Cys-154, Cys-156, and Cys-159. Glu-297 serves as the catalytic Nucleophile. Residue 346–349 coordinates substrate; the sequence is EQPH.

It belongs to the glycosyl hydrolase 42 family. Homotrimer.

The catalysed reaction is Hydrolysis of terminal non-reducing beta-D-galactose residues in beta-D-galactosides.. May play a role in the degradation of rhamnogalacturonan derived from plant cell walls. This is Beta-galactosidase YesZ (yesZ) from Bacillus licheniformis (strain ATCC 14580 / DSM 13 / JCM 2505 / CCUG 7422 / NBRC 12200 / NCIMB 9375 / NCTC 10341 / NRRL NRS-1264 / Gibson 46).